The primary structure comprises 350 residues: Uroporphyrinogen decarboxylase (350 aa).

Substrate contacts are provided by residues 28 to 32 (RQAGR), aspartate 78, tyrosine 154, threonine 209, and histidine 325.

It belongs to the uroporphyrinogen decarboxylase family. In terms of assembly, homodimer.

Its subcellular location is the cytoplasm. The enzyme catalyses uroporphyrinogen III + 4 H(+) = coproporphyrinogen III + 4 CO2. It participates in porphyrin-containing compound metabolism; protoporphyrin-IX biosynthesis; coproporphyrinogen-III from 5-aminolevulinate: step 4/4. In terms of biological role, catalyzes the decarboxylation of four acetate groups of uroporphyrinogen-III to yield coproporphyrinogen-III. The sequence is that of Uroporphyrinogen decarboxylase from Nitrobacter hamburgensis (strain DSM 10229 / NCIMB 13809 / X14).